A 22-amino-acid chain; its full sequence is Leptoglycin (22 aa).

Residues 1-22 (GLLGGLLGPLLGGGGGGGGGLL) are disordered.

As to expression, expressed by the skin glands.

The protein localises to the secreted. Antimicrobial protein. Has antibacterial activity against the Gram-negative bacteria E.coli ATCC 28922 (MIC=50 uM), P.aeruginosa ATCC 9027 (MIC=8 uM) and C.freundii ATCC 8090 (MIC=75 uM). Does not have hemolytic activity. The protein is Leptoglycin of Leptodactylus pentadactylus (Smokey jungle frog).